The primary structure comprises 95 residues: UPF0235 protein Sama_2480 (95 aa).

This sequence belongs to the UPF0235 family.

This Shewanella amazonensis (strain ATCC BAA-1098 / SB2B) protein is UPF0235 protein Sama_2480.